The primary structure comprises 1383 residues: DNA-directed RNA polymerase subunit beta'' (1383 aa).

4 residues coordinate Zn(2+): cysteine 220, cysteine 289, cysteine 296, and cysteine 299.

It belongs to the RNA polymerase beta' chain family. RpoC2 subfamily. As to quaternary structure, in plastids the minimal PEP RNA polymerase catalytic core is composed of four subunits: alpha, beta, beta', and beta''. When a (nuclear-encoded) sigma factor is associated with the core the holoenzyme is formed, which can initiate transcription. Zn(2+) serves as cofactor.

It is found in the plastid. It localises to the chloroplast. The catalysed reaction is RNA(n) + a ribonucleoside 5'-triphosphate = RNA(n+1) + diphosphate. Functionally, DNA-dependent RNA polymerase catalyzes the transcription of DNA into RNA using the four ribonucleoside triphosphates as substrates. The protein is DNA-directed RNA polymerase subunit beta'' of Oenothera biennis (German evening primrose).